We begin with the raw amino-acid sequence, 59 residues long: Light-harvesting protein B-800-850 alpha chain A (59 aa).

At 1–11 (MNQARIWTVVK) the chain is on the cytoplasmic side. A helical transmembrane segment spans residues 12–35 (PTVGLPLLLGSVTVIAILVHFAVL). H31 lines the a bacteriochlorophyll pocket. At 36–59 (SHTTWFSKYWNGKAAAIESSVNVG) the chain is on the periplasmic side.

It belongs to the antenna complex alpha subunit family. The core complex is formed by different alpha and beta chains, binding bacteriochlorophyll molecules, and arranged most probably in tetrameric structures disposed around the reaction center. The non-pigmented gamma chains may constitute additional components.

Its subcellular location is the cell inner membrane. Its function is as follows. Antenna complexes are light-harvesting systems, which transfer the excitation energy to the reaction centers. In Rhodopseudomonas palustris (strain ATCC BAA-98 / CGA009), this protein is Light-harvesting protein B-800-850 alpha chain A (pucAA).